Consider the following 155-residue polypeptide: Ribosomal RNA large subunit methyltransferase H (155 aa).

S-adenosyl-L-methionine is bound by residues L73, G104, and 123–128 (LSPLTL).

Belongs to the RNA methyltransferase RlmH family. In terms of assembly, homodimer.

Its subcellular location is the cytoplasm. The enzyme catalyses pseudouridine(1915) in 23S rRNA + S-adenosyl-L-methionine = N(3)-methylpseudouridine(1915) in 23S rRNA + S-adenosyl-L-homocysteine + H(+). In terms of biological role, specifically methylates the pseudouridine at position 1915 (m3Psi1915) in 23S rRNA. The polypeptide is Ribosomal RNA large subunit methyltransferase H (Pseudomonas aeruginosa (strain UCBPP-PA14)).